The primary structure comprises 93 residues: Ubiquinol-cytochrome-c reductase complex assembly factor 3 (93 aa).

Residues 1–7 lie on the Mitochondrial matrix side of the membrane; that stretch reads MDSLRKM. A helical membrane pass occupies residues 8–28; that stretch reads LISVAMLGAGAGVGYALLVIV. The mediates lipid-binding stretch occupies residues 23–80; it reads ALLVIVTPGERRKQEMLKEMPLQDPRSREEAARTQQLLLATLQEAATTQENVAWRKNW. At 29 to 93 the chain is on the mitochondrial intermembrane side; it reads TPGERRKQEM…GEGGAGGRSP (65 aa).

Belongs to the UQCC3 family. As to quaternary structure, associates with the ubiquinol-cytochrome c reductase complex (mitochondrial respiratory chain complex III or cytochrome b-c1 complex). Interacts with UQCC1. Forms a complex, named COMC, composed of UQCC1, UQCC2; UQCC3 and UQCC4; mediates MT-CYB hemylation and association with the first nuclear-encoded complex III subunit UQCRQ. Post-translationally, probably cleaved by OMA1 under mitochondrial stress conditions.

It localises to the mitochondrion inner membrane. Its function is as follows. Required for the assembly of the ubiquinol-cytochrome c reductase complex (mitochondrial respiratory chain complex III or cytochrome b-c1 complex), mediating cytochrome b recruitment and probably stabilization within the complex. Thereby, plays an important role in ATP production by mitochondria. Cardiolipin-binding protein, it may also control the cardiolipin composition of mitochondria membranes and their morphology. In Homo sapiens (Human), this protein is Ubiquinol-cytochrome-c reductase complex assembly factor 3.